Consider the following 290-residue polypeptide: MAMRQCAIYGKGGIGKSTTTQNLVAALAEMGKKVMIVGCDPKADSTRLILHSKAQNTIMEMAAEAGTVEDLELEDVLKAGYGGVKCVESGGPEPGVGCAGRGVITAINFLEEEGAYEDDLDFVFYDVLGDVVCGGFAMPIRENKAQEIYIVCSGEMMAMYAANNISKGIVKYANSGSVRLGGLICNSRNTDREDELIIALANKLGTQMIHFVPRDNVVQRAEIRRMTVIEYDPKAKQADEYRALARKVVDNKLLVIPNPITMDELEELLMEFGIMEVEDESIVGKTAEEV.

10–17 (GKGGIGKS) is a binding site for ATP. Cys-98 provides a ligand contact to [4Fe-4S] cluster. ADP-ribosylarginine; by dinitrogenase reductase ADP-ribosyltransferase is present on Arg-101. Cys-133 lines the [4Fe-4S] cluster pocket.

This sequence belongs to the NifH/BchL/ChlL family. As to quaternary structure, homodimer. [4Fe-4S] cluster is required as a cofactor. Post-translationally, the reversible ADP-ribosylation of Arg-101 inactivates the nitrogenase reductase and regulates nitrogenase activity.

It carries out the reaction N2 + 8 reduced [2Fe-2S]-[ferredoxin] + 16 ATP + 16 H2O = H2 + 8 oxidized [2Fe-2S]-[ferredoxin] + 2 NH4(+) + 16 ADP + 16 phosphate + 6 H(+). With respect to regulation, nitrogenase holoenzyme is subject to 'conformational protection' by FeSII; under oxidizing conditions FeSII binds to the holoenzyme and reversibly protects it from oxidation. In terms of biological role, the key enzymatic reactions in nitrogen fixation are catalyzed by the nitrogenase complex, which has 2 components: the iron protein (component 2) and a component 1 which is either a molybdenum-iron protein, a vanadium-iron, or an iron-iron protein. The protein is Nitrogenase iron protein 1 (nifH1) of Azotobacter vinelandii.